Here is a 461-residue protein sequence, read N- to C-terminus: Tubulin gamma chain (461 aa).

Residue alanine 142–glycine 148 coordinates GTP.

Belongs to the tubulin family.

The protein localises to the cytoplasm. It is found in the cytoskeleton. Its subcellular location is the microtubule organizing center. It localises to the spindle pole body. Its function is as follows. Tubulin is the major constituent of microtubules. The gamma chain is found at microtubule organizing centers (MTOC) such as the spindle poles or the centrosome, suggesting that it is involved in the minus-end nucleation of microtubule assembly. This chain is Tubulin gamma chain (tbg), found in Neurospora crassa (strain ATCC 24698 / 74-OR23-1A / CBS 708.71 / DSM 1257 / FGSC 987).